Here is a 198-residue protein sequence, read N- to C-terminus: Recombination protein RecR (198 aa).

A C4-type zinc finger spans residues 57–72 (CSICGNLTDDDPCHIC). The 96-residue stretch at 80–175 (ETILVVEASK…KVTRLARGLA (96 aa)) folds into the Toprim domain.

This sequence belongs to the RecR family.

In terms of biological role, may play a role in DNA repair. It seems to be involved in an RecBC-independent recombinational process of DNA repair. It may act with RecF and RecO. This chain is Recombination protein RecR, found in Streptococcus equi subsp. zooepidemicus (strain MGCS10565).